The sequence spans 299 residues: Trans-aconitate 3-methyltransferase (299 aa).

An N-acetylserine modification is found at S2.

It belongs to the methyltransferase superfamily. Tam family.

The protein localises to the cytoplasm. The catalysed reaction is trans-aconitate + S-adenosyl-L-methionine = (E)-2-(methoxycarbonylmethyl)but-2-enedioate + S-adenosyl-L-homocysteine. Catalyzes the S-adenosylmethionine monomethyl esterification of trans-aconitate and 3-isopropylmalate at high affinity and of other molecules like cis-aconitate, isocitrate, and citrate at lower velocities and affinities. The function of trans-aconitate methylation appears to be in reducing the toxicity of this spontaneous breakdown product of cis-aconitate. The role of 3-isopropylmalate methylation is unclear but may represent a metabolic branch at 3-isopropylmalate, where some of the material is taken in the pathway leading to leucine and some is taken in a pathway to the 3-isopropylmalate methyl ester, a molecule that provides a signal to switch from vegetative to invasive growth in response to amino acid starvation. This chain is Trans-aconitate 3-methyltransferase (TMT1), found in Saccharomyces cerevisiae (strain YJM789) (Baker's yeast).